We begin with the raw amino-acid sequence, 188 residues long: Putative manganese efflux pump MntP (188 aa).

6 consecutive transmembrane segments (helical) span residues 3–23 (WLTI…VALA), 39–59 (LGFH…LLGM), 65–85 (ISAY…GRMV), 104–124 (GMTM…VGLS), 125–145 (IAML…VAGV), and 167–187 (ICGG…HTLL).

Belongs to the MntP (TC 9.B.29) family.

The protein localises to the cell inner membrane. Probably functions as a manganese efflux pump. The chain is Putative manganese efflux pump MntP from Citrifermentans bemidjiense (strain ATCC BAA-1014 / DSM 16622 / JCM 12645 / Bem) (Geobacter bemidjiensis).